The following is a 180-amino-acid chain: Large ribosomal subunit protein uL5 (180 aa).

The protein belongs to the universal ribosomal protein uL5 family. As to quaternary structure, part of the 50S ribosomal subunit; part of the 5S rRNA/L5/L18/L25 subcomplex. Contacts the 5S rRNA and the P site tRNA. Forms a bridge to the 30S subunit in the 70S ribosome.

This is one of the proteins that bind and probably mediate the attachment of the 5S RNA into the large ribosomal subunit, where it forms part of the central protuberance. In the 70S ribosome it contacts protein S13 of the 30S subunit (bridge B1b), connecting the 2 subunits; this bridge is implicated in subunit movement. Contacts the P site tRNA; the 5S rRNA and some of its associated proteins might help stabilize positioning of ribosome-bound tRNAs. In Clostridium tetani (strain Massachusetts / E88), this protein is Large ribosomal subunit protein uL5.